The sequence spans 549 residues: O-fucosyltransferase 29 (549 aa).

Residues Thr43 to Phe63 traverse the membrane as a helical; Signal-anchor for type II membrane protein segment. Asn152 carries N-linked (GlcNAc...) asparagine glycosylation. Residue His292–Arg294 participates in substrate binding. N-linked (GlcNAc...) asparagine glycosylation is found at Asn359 and Asn527. Residues Pro506 to Asp549 form a disordered region. Positions Asp540–Asp549 are enriched in basic and acidic residues.

This sequence belongs to the glycosyltransferase GT106 family.

The protein localises to the membrane. It participates in glycan metabolism. The protein is O-fucosyltransferase 29 of Arabidopsis thaliana (Mouse-ear cress).